A 544-amino-acid chain; its full sequence is Chaperonin GroEL (544 aa).

Residues 30–33 (TLGP), K51, 87–91 (DGTTT), G415, and D495 contribute to the ATP site.

The protein belongs to the chaperonin (HSP60) family. As to quaternary structure, forms a cylinder of 14 subunits composed of two heptameric rings stacked back-to-back. Interacts with the co-chaperonin GroES.

It is found in the cytoplasm. It carries out the reaction ATP + H2O + a folded polypeptide = ADP + phosphate + an unfolded polypeptide.. Functionally, together with its co-chaperonin GroES, plays an essential role in assisting protein folding. The GroEL-GroES system forms a nano-cage that allows encapsulation of the non-native substrate proteins and provides a physical environment optimized to promote and accelerate protein folding. In Neisseria flavescens, this protein is Chaperonin GroEL.